Consider the following 95-residue polypeptide: Aspartyl/glutamyl-tRNA(Asn/Gln) amidotransferase subunit C (95 aa).

Belongs to the GatC family. In terms of assembly, heterotrimer of A, B and C subunits.

The enzyme catalyses L-glutamyl-tRNA(Gln) + L-glutamine + ATP + H2O = L-glutaminyl-tRNA(Gln) + L-glutamate + ADP + phosphate + H(+). The catalysed reaction is L-aspartyl-tRNA(Asn) + L-glutamine + ATP + H2O = L-asparaginyl-tRNA(Asn) + L-glutamate + ADP + phosphate + 2 H(+). In terms of biological role, allows the formation of correctly charged Asn-tRNA(Asn) or Gln-tRNA(Gln) through the transamidation of misacylated Asp-tRNA(Asn) or Glu-tRNA(Gln) in organisms which lack either or both of asparaginyl-tRNA or glutaminyl-tRNA synthetases. The reaction takes place in the presence of glutamine and ATP through an activated phospho-Asp-tRNA(Asn) or phospho-Glu-tRNA(Gln). This Brucella abortus (strain S19) protein is Aspartyl/glutamyl-tRNA(Asn/Gln) amidotransferase subunit C.